Consider the following 123-residue polypeptide: UPF0102 protein CLD_2200 (123 aa).

The protein belongs to the UPF0102 family.

The chain is UPF0102 protein CLD_2200 from Clostridium botulinum (strain Okra / Type B1).